The sequence spans 159 residues: Transcription elongation factor GreA (159 aa).

Residues 5–77 adopt a coiled-coil conformation; that stretch reads REVVLTAQGL…LETMLRKAVI (73 aa).

This sequence belongs to the GreA/GreB family.

Necessary for efficient RNA polymerase transcription elongation past template-encoded arresting sites. The arresting sites in DNA have the property of trapping a certain fraction of elongating RNA polymerases that pass through, resulting in locked ternary complexes. Cleavage of the nascent transcript by cleavage factors such as GreA or GreB allows the resumption of elongation from the new 3'terminus. GreA releases sequences of 2 to 3 nucleotides. This is Transcription elongation factor GreA from Alkaliphilus oremlandii (strain OhILAs) (Clostridium oremlandii (strain OhILAs)).